The chain runs to 215 residues: Interleukin-12 subunit alpha (215 aa).

Positions 1 to 22 are cleaved as a signal peptide; that stretch reads MCQSRYLLFLATLVLLNHLTSA. 3 cysteine pairs are disulfide-bonded: cysteine 33-cysteine 106, cysteine 60-cysteine 192, and cysteine 81-cysteine 119. Residues asparagine 35, asparagine 89, and asparagine 167 are each glycosylated (N-linked (GlcNAc...) asparagine).

Belongs to the IL-6 superfamily. Heterodimer with IL12B; disulfide-linked. This heterodimer is known as interleukin IL-12. Heterodimer with EBI3/IL27B; not disulfide-linked. This heterodimer is known as interleukin IL-35. Interacts with NBR1; this interaction promotes IL-12 secretion.

It is found in the secreted. Heterodimerizes with IL12B to form the IL-12 cytokine or with EBI3/IL27B to form the IL-35 cytokine. IL-12 is primarily produced by professional antigen-presenting cells (APCs) such as B-cells and dendritic cells (DCs) as well as macrophages and granulocytes and regulates T-cell and natural killer-cell responses, induces the production of interferon-gamma (IFN-gamma), favors the differentiation of T-helper 1 (Th1) cells and is an important link between innate resistance and adaptive immunity. Mechanistically, exerts its biological effects through a receptor composed of IL12R1 and IL12R2 subunits. Binding to the receptor results in the rapid tyrosine phosphorylation of a number of cellular substrates including the JAK family kinases TYK2 and JAK2. In turn, recruited STAT4 gets phosphorylated and translocates to the nucleus where it regulates cytokine/growth factor responsive genes. As part of IL-35, plays essential roles in maintaining the immune homeostasis of the liver microenvironment and also functions as an immune-suppressive cytokine. Mediates biological events through unconventional receptors composed of IL12RB2 and gp130/IL6ST heterodimers or homodimers. Signaling requires the transcription factors STAT1 and STAT4, which form a unique heterodimer that binds to distinct DNA sites. This is Interleukin-12 subunit alpha (Il12a) from Rattus norvegicus (Rat).